The sequence spans 159 residues: Probable NADH dehydrogenase [ubiquinone] 1 alpha subcomplex subunit 12 (159 aa).

This sequence belongs to the complex I NDUFA12 subunit family. In terms of assembly, complex I is composed of at least 49 different subunits.

The protein localises to the mitochondrion inner membrane. Functionally, accessory subunit of the mitochondrial membrane respiratory chain NADH dehydrogenase (Complex I), that is believed not to be involved in catalysis. Complex I functions in the transfer of electrons from NADH to the respiratory chain. The immediate electron acceptor for the enzyme is believed to be ubiquinone. The sequence is that of Probable NADH dehydrogenase [ubiquinone] 1 alpha subcomplex subunit 12 from Arabidopsis thaliana (Mouse-ear cress).